We begin with the raw amino-acid sequence, 354 residues long: uncharacterized protein (354 aa).

The protein belongs to the band 7/mec-2 family.

It is found in the mitochondrion. This is an uncharacterized protein from Schizosaccharomyces pombe (strain 972 / ATCC 24843) (Fission yeast).